The sequence spans 302 residues: Phosphoribosylaminoimidazole-succinocarboxamide synthase (302 aa).

It belongs to the SAICAR synthetase family.

It carries out the reaction 5-amino-1-(5-phospho-D-ribosyl)imidazole-4-carboxylate + L-aspartate + ATP = (2S)-2-[5-amino-1-(5-phospho-beta-D-ribosyl)imidazole-4-carboxamido]succinate + ADP + phosphate + 2 H(+). The protein operates within purine metabolism; IMP biosynthesis via de novo pathway; 5-amino-1-(5-phospho-D-ribosyl)imidazole-4-carboxamide from 5-amino-1-(5-phospho-D-ribosyl)imidazole-4-carboxylate: step 1/2. This is Phosphoribosylaminoimidazole-succinocarboxamide synthase from Cupriavidus pinatubonensis (strain JMP 134 / LMG 1197) (Cupriavidus necator (strain JMP 134)).